We begin with the raw amino-acid sequence, 689 residues long: Elongation factor G (689 aa).

The region spanning 8 to 283 is the tr-type G domain; the sequence is SKCRNIGIMA…AVVDFLPAPN (276 aa). Residues 17–24, 81–85, and 135–138 each bind GTP; these read AHIDAGKT, DTPGH, and NKMD.

It belongs to the TRAFAC class translation factor GTPase superfamily. Classic translation factor GTPase family. EF-G/EF-2 subfamily.

The protein resides in the cytoplasm. Its function is as follows. Catalyzes the GTP-dependent ribosomal translocation step during translation elongation. During this step, the ribosome changes from the pre-translocational (PRE) to the post-translocational (POST) state as the newly formed A-site-bound peptidyl-tRNA and P-site-bound deacylated tRNA move to the P and E sites, respectively. Catalyzes the coordinated movement of the two tRNA molecules, the mRNA and conformational changes in the ribosome. The sequence is that of Elongation factor G from Ehrlichia ruminantium (strain Welgevonden).